The chain runs to 578 residues: SCARECROW-LIKE protein 7 (578 aa).

Over residues valine 18–glutamine 29 the composition is skewed to low complexity. Disordered stretches follow at residues valine 18–glycine 84 and proline 146–proline 173. Over residues proline 49 to glutamine 61 the composition is skewed to basic residues. Low complexity predominate over residues glutamine 62–histidine 74. A compositionally biased stretch (pro residues) spans proline 146 to threonine 156. A compositionally biased stretch (low complexity) spans histidine 157–proline 173. The 381-residue stretch at serine 198–arginine 578 folds into the GRAS domain. The segment at alanine 205–alanine 264 is leucine repeat I (LRI). Residues tyrosine 283–glycine 349 form a VHIID region. The VHIID motif lies at isoleucine 314–aspartate 318. Residues alanine 365 to aspartate 397 form a leucine repeat II (LRII) region. The PFYRE stretch occupies residues valine 406–arginine 497. The LXXLL motif motif lies at leucine 414–leucine 418. Positions glycine 500–arginine 578 are SAW.

This sequence belongs to the GRAS family. As to quaternary structure, homodimer.

The protein resides in the nucleus. Probable transcription factor involved in plant development. Involved in environmental abiotic stress resistance. May increase the expression of stress-responsive genes. Binds DNA in vitro. This is SCARECROW-LIKE protein 7 from Oryza sativa subsp. japonica (Rice).